We begin with the raw amino-acid sequence, 172 residues long: MRNLILVGPMGAGKSTIGRLLAKELRLLFKDSDKEIELRCGANIPWIFDKEGEPGFRDREQAMIAELCALDGVVLATGGGAVMREANRQALHQGGRVIYLHASVEQQVGRTARDRNRPLLRTANPEATLRTLLETRDPLYREIADLVVETDERPPRMVVIDILERLQQLPPR.

11 to 16 (GAGKST) serves as a coordination point for ATP. Position 15 (S15) interacts with Mg(2+). Residues D33, R57, and G79 each coordinate substrate. R117 provides a ligand contact to ATP. Substrate is bound at residue R136. R153 serves as a coordination point for ATP.

This sequence belongs to the shikimate kinase family. In terms of assembly, monomer. Requires Mg(2+) as cofactor.

The protein localises to the cytoplasm. The catalysed reaction is shikimate + ATP = 3-phosphoshikimate + ADP + H(+). It functions in the pathway metabolic intermediate biosynthesis; chorismate biosynthesis; chorismate from D-erythrose 4-phosphate and phosphoenolpyruvate: step 5/7. Functionally, catalyzes the specific phosphorylation of the 3-hydroxyl group of shikimic acid using ATP as a cosubstrate. This Pseudomonas putida (strain ATCC 700007 / DSM 6899 / JCM 31910 / BCRC 17059 / LMG 24140 / F1) protein is Shikimate kinase.